A 457-amino-acid polypeptide reads, in one-letter code: Carboxypeptidase N catalytic chain (457 aa).

An N-terminal signal peptide occupies residues 1-23; that stretch reads MPDLPSAFLPLLLLSKFVTPVTF. One can recognise a Peptidase M14 domain in the interval 24 to 338; it reads RHHRYDDLVR…EALIQFLEQV (315 aa). Residues C42 and C104 are joined by a disulfide bond. H86, E89, and H216 together coordinate Zn(2+). C271 and C311 are oxidised to a cystine. E308 acts as the Proton donor/acceptor in catalysis. 3 O-linked (GalNAc...) threonine glycosylation sites follow: T400, T402, and T409. The interval 418–457 is disordered; it reads STTQVHPVQKAPGRGQGSRAKQPRTSRKKDQAAKRHRGPA.

The protein belongs to the peptidase M14 family. In terms of assembly, tetramer of two catalytic chains and two glycosylated inactive chains. The cofactor is Zn(2+). In terms of tissue distribution, plasma. Expressed in liver.

Its subcellular location is the secreted. The protein resides in the extracellular space. It catalyses the reaction Release of a C-terminal basic amino acid, preferentially lysine.. Its function is as follows. Protects the body from potent vasoactive and inflammatory peptides containing C-terminal Arg or Lys (such as kinins or anaphylatoxins) which are released into the circulation. The sequence is that of Carboxypeptidase N catalytic chain (Cpn1) from Rattus norvegicus (Rat).